The primary structure comprises 120 residues: UPF0231 protein YacL (120 aa).

Belongs to the UPF0231 family.

The chain is UPF0231 protein YacL from Salmonella paratyphi A (strain ATCC 9150 / SARB42).